The primary structure comprises 217 residues: Large ribosomal subunit protein uL3 (217 aa).

The segment at 127-162 (GFSRGPMSHGSKNHRAPGSTGAGTTPGRIYPGKRMA) is disordered. A compositionally biased stretch (low complexity) spans 142–153 (APGSTGAGTTPG).

This sequence belongs to the universal ribosomal protein uL3 family. As to quaternary structure, part of the 50S ribosomal subunit. Forms a cluster with proteins L14 and L19.

Functionally, one of the primary rRNA binding proteins, it binds directly near the 3'-end of the 23S rRNA, where it nucleates assembly of the 50S subunit. The sequence is that of Large ribosomal subunit protein uL3 from Prochlorococcus marinus (strain AS9601).